Reading from the N-terminus, the 473-residue chain is Tubulin gamma chain (473 aa).

The interval 33–56 is disordered; it reads TDGLSQLPDSSTERDDDTKPFFRE. Residues 43–56 show a composition bias toward basic and acidic residues; it reads STERDDDTKPFFRE. 143–149 is a GTP binding site; sequence AGGTGSG.

It belongs to the tubulin family. As to quaternary structure, interacts with SPC72, SPC97 and SPC98.

The protein localises to the cytoplasm. It localises to the cytoskeleton. It is found in the microtubule organizing center. Its subcellular location is the spindle pole body. Its function is as follows. Tubulin is the major constituent of microtubules. The gamma chain is found at microtubule organizing centers (MTOC) such as the spindle poles or the centrosome, suggesting that it is involved in the minus-end nucleation of microtubule assembly. TUB4 is an important spindle pole body component that organizes both cytoplasmic and nuclear microtubule arrays. The sequence is that of Tubulin gamma chain (TUB4) from Saccharomyces cerevisiae (strain ATCC 204508 / S288c) (Baker's yeast).